Consider the following 206-residue polypeptide: ATP phosphoribosyltransferase (206 aa).

This sequence belongs to the ATP phosphoribosyltransferase family. Short subfamily. As to quaternary structure, heteromultimer composed of HisG and HisZ subunits.

It is found in the cytoplasm. The enzyme catalyses 1-(5-phospho-beta-D-ribosyl)-ATP + diphosphate = 5-phospho-alpha-D-ribose 1-diphosphate + ATP. It functions in the pathway amino-acid biosynthesis; L-histidine biosynthesis; L-histidine from 5-phospho-alpha-D-ribose 1-diphosphate: step 1/9. Catalyzes the condensation of ATP and 5-phosphoribose 1-diphosphate to form N'-(5'-phosphoribosyl)-ATP (PR-ATP). Has a crucial role in the pathway because the rate of histidine biosynthesis seems to be controlled primarily by regulation of HisG enzymatic activity. The sequence is that of ATP phosphoribosyltransferase from Campylobacter curvus (strain 525.92).